The chain runs to 337 residues: tRNA N6-adenosine threonylcarbamoyltransferase (337 aa).

Positions 111 and 115 each coordinate Fe cation. Substrate-binding positions include 134–138 (LVSGG), aspartate 167, glycine 180, and asparagine 272. A Fe cation-binding site is contributed by aspartate 300.

It belongs to the KAE1 / TsaD family. Fe(2+) serves as cofactor.

It is found in the cytoplasm. It catalyses the reaction L-threonylcarbamoyladenylate + adenosine(37) in tRNA = N(6)-L-threonylcarbamoyladenosine(37) in tRNA + AMP + H(+). Its function is as follows. Required for the formation of a threonylcarbamoyl group on adenosine at position 37 (t(6)A37) in tRNAs that read codons beginning with adenine. Is involved in the transfer of the threonylcarbamoyl moiety of threonylcarbamoyl-AMP (TC-AMP) to the N6 group of A37, together with TsaE and TsaB. TsaD likely plays a direct catalytic role in this reaction. The chain is tRNA N6-adenosine threonylcarbamoyltransferase from Escherichia coli O45:K1 (strain S88 / ExPEC).